Here is a 446-residue protein sequence, read N- to C-terminus: MKIVVIGTNHAGIATANTLLEQYPGHEIVMIDRNSNMSYLGCGTAIWVGRQIEKPDELFYAKAEDFEAKGVKILTETEVSEIDFANKKVYAKTKSDDEIIEAYDKLVLATGSRPIIPNLPGKDLKGIHFLKLFQEGQAIDAEFAKEKVKRIAVIGAGYIGTEIAEAAKRRGKEVLLFDAENTSLASYYDEEFAKGMDENLAQHGIELHFGELAKEFKANEEGYVSQIVTNKATYDVDLVINCIGFTANSALASDKLATFKNGAIKVDKHQQSSDPDVYAVGDVATIYSNALQDFTYIALASNAVRSGIVAGHNIGGKELESVGVQGSNGISIFGYNMTSTGLSVKAAKKLGLEVSFSDFEDKQKAWFLHENNDSVKIRIVYETKSRRIIGAQLASKSEIIAGNINMFSLAIQEKKTIDELALLDLFFLPHFNSPYNYMTVAALNAK.

FAD-binding positions include 7–11, Asp-32, Cys-42, Val-79, 109–112, Lys-131, and Tyr-158; these read GTNHA and ATGS. The Proton acceptor role is filled by His-10. Catalysis depends on Cys-42, which acts as the Redox-active. At Cys-42 the chain carries Cysteine sulfinic acid (-SO2H). 4 residues coordinate NAD(+): Ile-159, Asp-178, Tyr-187, and Gly-244. Asp-282 provides a ligand contact to FAD. Ala-298 contacts NAD(+). Leu-299, Ala-300, and Ser-301 together coordinate FAD. NAD(+) is bound at residue Gly-329. Phe-427 serves as a coordination point for FAD.

The protein belongs to the class-III pyridine nucleotide-disulfide oxidoreductase family. Homodimer. The cofactor is FAD.

The enzyme catalyses 2 NADH + O2 + 2 H(+) = 2 NAD(+) + 2 H2O. With respect to regulation, inhibited by hydrogen peroxide, sulfhydryl reagents and quinine, but not by EDTA. Functionally, catalyzes the four-electron reduction of molecular oxygen to water. Active on beta-NADH, but not on alpha-NADH, beta-NADPH or alpha-NADPH. Under aerobic conditions, oxygen acts as the electron acceptor. Under anaerobic conditions, DCIP and MB can replace oxygen as the electron acceptor. This chain is NADH oxidase, found in Lactococcus lactis subsp. cremoris (strain MG1363).